The following is a 182-amino-acid chain: Vacuolar protein sorting-associated protein 29 (182 aa).

This sequence belongs to the VPS29 family. Component of the commander complex consisting of the CCC subcomplex and the retriever subcomplex. Component of the heterotrimeric retriever complex formed by vps26c, vps29 and vps35l; within the complex interacts with vps35l. Component of the heterotrimeric retromer cargo-selective complex (CSC), also described as vacuolar protein sorting subcomplex (VPS), formed by vps26 (vps26a or vps26b), vps29 and vps35. The CSC has a highly elongated structure with vps26 and vps29 binding independently at opposite distal ends of vps35 as central platform.

Its subcellular location is the cytoplasm. It is found in the membrane. The protein resides in the endosome membrane. Its function is as follows. Component of the commander complex that is essential for endosomal recycling of transmembrane cargos; the commander complex is composed of the CCC subcomplex and the retriever subcomplex. Component of the retriever complex, which is a heterotrimeric complex related to retromer cargo-selective complex (CSC) and essential for retromer-independent retrieval and recycling of numerous cargos. Component of the retromer cargo-selective complex (CSC). The CSC is believed to be the core functional component of retromer or respective retromer complex variants acting to prevent missorting of selected transmembrane cargo proteins into the lysosomal degradation pathway. In the endosomes, retriever complex drives the retrieval and recycling of NxxY-motif-containing cargo proteins by coupling to snx17, a cargo essential for the homeostatic maintenance of numerous cell surface proteins associated with processes that include cell migration, cell adhesion, nutrient supply and cell signaling. The recruitment of the retriever complex to the endosomal membrane involves CCC and WASH complexes. This is Vacuolar protein sorting-associated protein 29 (vps29) from Danio rerio (Zebrafish).